The chain runs to 554 residues: MTPEELSLAISACLKDAVAAGEIALAESAVPEDVRVERPKNRDHGDWATNIALQLAKQAGTNPREFATILSARLKTISGVSAVDIAGPGFLNITVDAAAAGALAKAIVEAGTQYGTNTALAGHTVNMEFVSANPTGPLHIGHTRWAALGDAIARVLRASGADVTAEYYINDAGSQMNTFANSVYSRLHGLPVPEGGYPGQYIADLGHEVLTAHPDIRELTEVAALPVIRAAAYEAQMKDIKATLADFGVAFDVFFSEQELHDAGAIESAVARLREQGHVFDDGGAVWLRTTDFGDDKDRVMIRANGEPTYFAADAAYYLSKKDRGYTEKIYLLGADHHGYIHRLKAIAAAAGDDPEVNIEVLIGQLVSVNGAKLSKRAGNIIELKDLIDWLGKDAVRYSLARFPADSPLTLDPELLKKNSNENPVFYVQYAHARSRGAARNAVAAGVERQVDGADSFDASLLDHATENELLSYLGSYPSIVAKAAELREPHRVARHLEAIAGAYHRWYDACRIAPMGEEAVTDVNRTRLWLNDATSQVLANGLDLLGVSAPERM.

Positions 132–142 (ANPTGPLHIGH) match the 'HIGH' region motif.

It belongs to the class-I aminoacyl-tRNA synthetase family. As to quaternary structure, monomer.

It is found in the cytoplasm. It carries out the reaction tRNA(Arg) + L-arginine + ATP = L-arginyl-tRNA(Arg) + AMP + diphosphate. This chain is Arginine--tRNA ligase, found in Pseudarthrobacter chlorophenolicus (strain ATCC 700700 / DSM 12829 / CIP 107037 / JCM 12360 / KCTC 9906 / NCIMB 13794 / A6) (Arthrobacter chlorophenolicus).